The chain runs to 235 residues: Protein GrpE (235 aa).

Composition is skewed to basic and acidic residues over residues 1–16 (MENK…HEKN) and 24–35 (NNVKKENLHEDQ). The tract at residues 1-51 (MENKNQKHNNEFHEKNQQSQKDNNNVKKENLHEDQSDLNDANFDDGGKKNK) is disordered.

It belongs to the GrpE family. In terms of assembly, homodimer.

It is found in the cytoplasm. In terms of biological role, participates actively in the response to hyperosmotic and heat shock by preventing the aggregation of stress-denatured proteins, in association with DnaK and GrpE. It is the nucleotide exchange factor for DnaK and may function as a thermosensor. Unfolded proteins bind initially to DnaJ; upon interaction with the DnaJ-bound protein, DnaK hydrolyzes its bound ATP, resulting in the formation of a stable complex. GrpE releases ADP from DnaK; ATP binding to DnaK triggers the release of the substrate protein, thus completing the reaction cycle. Several rounds of ATP-dependent interactions between DnaJ, DnaK and GrpE are required for fully efficient folding. In Malacoplasma penetrans (strain HF-2) (Mycoplasma penetrans), this protein is Protein GrpE.